A 567-amino-acid polypeptide reads, in one-letter code: Proline--tRNA ligase (567 aa).

It belongs to the class-II aminoacyl-tRNA synthetase family. ProS type 1 subfamily. Homodimer.

Its subcellular location is the cytoplasm. It carries out the reaction tRNA(Pro) + L-proline + ATP = L-prolyl-tRNA(Pro) + AMP + diphosphate. Its function is as follows. Catalyzes the attachment of proline to tRNA(Pro) in a two-step reaction: proline is first activated by ATP to form Pro-AMP and then transferred to the acceptor end of tRNA(Pro). As ProRS can inadvertently accommodate and process non-cognate amino acids such as alanine and cysteine, to avoid such errors it has two additional distinct editing activities against alanine. One activity is designated as 'pretransfer' editing and involves the tRNA(Pro)-independent hydrolysis of activated Ala-AMP. The other activity is designated 'posttransfer' editing and involves deacylation of mischarged Ala-tRNA(Pro). The misacylated Cys-tRNA(Pro) is not edited by ProRS. This Geobacillus thermodenitrificans (strain NG80-2) protein is Proline--tRNA ligase.